A 145-amino-acid chain; its full sequence is Basic phospholipase A2 P'513 (145 aa).

The signal sequence occupies residues 1-21; sequence MYPAHLLLLLAVCVSLLGASA. A propeptide spanning residues 22–27 is cleaved from the precursor; the sequence is IPPLPL. 7 disulfides stabilise this stretch: cysteine 38–cysteine 98, cysteine 54–cysteine 144, cysteine 56–cysteine 72, cysteine 71–cysteine 125, cysteine 78–cysteine 118, cysteine 87–cysteine 111, and cysteine 105–cysteine 116. Ca(2+) is bound by residues tyrosine 55, glycine 57, and glycine 59. Residue histidine 75 is part of the active site. Aspartate 76 contacts Ca(2+). Aspartate 119 is an active-site residue.

Belongs to the phospholipase A2 family. Group I subfamily. D49 sub-subfamily. Requires Ca(2+) as cofactor. Expressed by the venom gland.

The protein resides in the secreted. The enzyme catalyses a 1,2-diacyl-sn-glycero-3-phosphocholine + H2O = a 1-acyl-sn-glycero-3-phosphocholine + a fatty acid + H(+). In terms of biological role, PLA2 catalyzes the calcium-dependent hydrolysis of the 2-acyl groups in 3-sn-phosphoglycerides. The polypeptide is Basic phospholipase A2 P'513 (Laticauda laticaudata (Blue-ringed sea krait)).